The primary structure comprises 207 residues: Interferon kappa (207 aa).

A signal peptide spans 1–27 (MSTKPDMIQKCLWLEILMGIFIAGTLS). 2 cysteine pairs are disulfide-bonded: C30/C128 and C59/C181. Residues 118–148 (LDQQAEYLNQCLEEDKNENEDMKEMKENEMK) are a coiled coil.

This sequence belongs to the alpha/beta interferon family. Expressed in keratinocytes, monocytes and in resting dendritic cells.

Its subcellular location is the secreted. In terms of biological role, may play a role in the regulation of immune cell function. Cytokine that imparts cellular protection against viral infection in a species-specific manner. Activates the interferon-stimulated response element signaling pathway. It is able to directly modulate cytokine release from monocytes and dendritic cells. Binds heparin. The sequence is that of Interferon kappa (IFNK) from Homo sapiens (Human).